The sequence spans 409 residues: Microfibrillar-associated protein 3-like (409 aa).

Positions M1–A28 are cleaved as a signal peptide. Residues K29–D148 lie on the Extracellular side of the membrane. N-linked (GlcNAc...) asparagine glycosylation is found at N33, N37, N67, N111, and N135. In terms of domain architecture, Ig-like C2-type spans P47 to R141. C68 and C125 form a disulfide bridge. The chain crosses the membrane as a helical span at residues M149–I169. Topologically, residues T170–V409 are cytoplasmic. Position 287 is a phosphotyrosine (Y287). S298, S303, S306, and S307 each carry phosphoserine. Residues V319 to E392 form a disordered region. A compositionally biased stretch (acidic residues) spans Q333–P348. Positions D362–E372 are enriched in polar residues.

Its subcellular location is the cell membrane. It is found in the nucleus. It localises to the cytoplasm. May participate in the nuclear signaling of EGFR and MAPK1/ERK2. This is Microfibrillar-associated protein 3-like (Mfap3l) from Rattus norvegicus (Rat).